Here is a 477-residue protein sequence, read N- to C-terminus: Putative BTB/POZ domain-containing protein R830 (477 aa).

The BTB domain maps to 13–83 (SDLELILVDK…FYGIETNNDP (71 aa)).

It belongs to the mimivirus BTB/WD family.

The protein is Putative BTB/POZ domain-containing protein R830 of Acanthamoeba polyphaga mimivirus (APMV).